A 142-amino-acid polypeptide reads, in one-letter code: Nucleoside diphosphate kinase (142 aa).

Residues Lys-11, Phe-59, Arg-87, Thr-93, Arg-104, and Asn-114 each contribute to the ATP site. The Pros-phosphohistidine intermediate role is filled by His-117.

Belongs to the NDK family. In terms of assembly, homotetramer. Mg(2+) is required as a cofactor.

The protein localises to the cytoplasm. The catalysed reaction is a 2'-deoxyribonucleoside 5'-diphosphate + ATP = a 2'-deoxyribonucleoside 5'-triphosphate + ADP. The enzyme catalyses a ribonucleoside 5'-diphosphate + ATP = a ribonucleoside 5'-triphosphate + ADP. Its function is as follows. Major role in the synthesis of nucleoside triphosphates other than ATP. The ATP gamma phosphate is transferred to the NDP beta phosphate via a ping-pong mechanism, using a phosphorylated active-site intermediate. This chain is Nucleoside diphosphate kinase, found in Aeromonas hydrophila subsp. hydrophila (strain ATCC 7966 / DSM 30187 / BCRC 13018 / CCUG 14551 / JCM 1027 / KCTC 2358 / NCIMB 9240 / NCTC 8049).